Here is a 77-residue protein sequence, read N- to C-terminus: MAVGVSPGELRELSDDELIERLRESKEELFNLRFQMATGQLSNNRRLRVVRQEIARVYTVLRERELGLASGPAGEES.

The protein belongs to the universal ribosomal protein uL29 family.

This Mycobacterium sp. (strain JLS) protein is Large ribosomal subunit protein uL29.